We begin with the raw amino-acid sequence, 415 residues long: Glutamyl-tRNA reductase (415 aa).

Residues Thr-49–Arg-52, Ser-106, Glu-111–Gln-113, and Gln-117 each bind substrate. Cys-50 serves as the catalytic Nucleophile. Gly-186–Ile-191 provides a ligand contact to NADP(+).

This sequence belongs to the glutamyl-tRNA reductase family. In terms of assembly, homodimer.

The enzyme catalyses (S)-4-amino-5-oxopentanoate + tRNA(Glu) + NADP(+) = L-glutamyl-tRNA(Glu) + NADPH + H(+). Its pathway is porphyrin-containing compound metabolism; protoporphyrin-IX biosynthesis; 5-aminolevulinate from L-glutamyl-tRNA(Glu): step 1/2. Functionally, catalyzes the NADPH-dependent reduction of glutamyl-tRNA(Glu) to glutamate 1-semialdehyde (GSA). This chain is Glutamyl-tRNA reductase, found in Teredinibacter turnerae (strain ATCC 39867 / T7901).